Reading from the N-terminus, the 489-residue chain is Protein LMBR1L (489 aa).

Topologically, residues 1–21 (MEAPDCEVLSVREQLFHERIR) are extracellular. The segment at 1–59 (MEAPDCEVLSVREQLFHERIRECIISTLLFATLYILCHIFLTRFKKPAEFTTVDDADAT) is interaction with LGB. Residues 1–76 (MEAPDCEVLS…LCTFTLAIAL (76 aa)) form an LCN1-binding region. Residues 22-42 (ECIISTLLFATLYILCHIFLT) traverse the membrane as a helical segment. Residues 43-66 (RFKKPAEFTTVDDADATVNKIALE) lie on the Cytoplasmic side of the membrane. The helical transmembrane segment at 67–87 (LCTFTLAIALGAVLLLPFSII) threads the bilayer. Residues 88-114 (SNEVLLSLPRNYYIQWLNGSLIHGLWN) are Extracellular-facing. Residues 115–135 (LVFLFSNLSLIFLMPFAYFFT) form a helical membrane-spanning segment. The Cytoplasmic portion of the chain corresponds to 136-154 (ESEGFAGSRKGVLGRVYET). A helical membrane pass occupies residues 155–175 (VVMLMLLTLLVLGMVWVASAI). Residues 176–196 (VDNNKASRESLYDFWEYYLPY) are Extracellular-facing. Residues 197–217 (LYSCISFLGVLLLLVCTPLGL) form a helical membrane-spanning segment. The Cytoplasmic segment spans residues 218 to 305 (ARMFSVTGKL…NLGYPLAMLC (88 aa)). The helical transmembrane segment at 306–326 (LLVLTGLSVLIVAIHILELLI) threads the bilayer. At 327-350 (DEAAMPRGMQGASLGQVSFSKLGS) the chain is on the extracellular side. Residues 351–371 (FGAVVQVVLIFYLMVSSVVGF) form a helical membrane-spanning segment. Residues 372 to 388 (YSSPLFRSLRPRWHDTA) lie on the Cytoplasmic side of the membrane. A helical membrane pass occupies residues 389 to 409 (MTQIIGNCVCLLVLSSALPVF). Over 410 to 431 (SRTLGLTRFDLLGDFGRFNWLG) the chain is Extracellular. The chain crosses the membrane as a helical span at residues 432-452 (NFYIVFLYNAAFAGLTTLCLV). Residues 453-489 (KTFTAAVRAELIRAFGLDRLPLPVSGFPRASRKTQHQ) lie on the Cytoplasmic side of the membrane.

The protein belongs to the LIMR family. As to quaternary structure, dimer. Can also form higher oligomers. Interacts with LCN1; this interaction mediates the endocytosis of LCN1. Interacts with UBAC2, FAF2, VCP, AMFR, ZNRF3, CTNNB1, LRP6, GSK3A, GSK3B, FZD6, DVL2 and RNF43. Interaction with LGB and SCGB1A1 is controversial.

The protein resides in the cell membrane. The protein localises to the endoplasmic reticulum membrane. Functionally, plays an essential role in lymphocyte development by negatively regulating the canonical Wnt signaling pathway. In association with UBAC2 and E3 ubiquitin-protein ligase AMFR, promotes the ubiquitin-mediated degradation of CTNNB1 and Wnt receptors FZD6 and LRP6. LMBR1L stabilizes the beta-catenin destruction complex that is required for regulating CTNNB1 levels. Acts as a LCN1 receptor and can mediate its endocytosis. The protein is Protein LMBR1L (LMBR1L) of Macaca fascicularis (Crab-eating macaque).